The following is a 261-amino-acid chain: Flap endonuclease Xni (261 aa).

Aspartate 105 contributes to the Mg(2+) binding site. The 5'-3' exonuclease domain maps to 164–256; sequence SQFLDLMALA…DFRVNSPTKA (93 aa). Leucine 172, alanine 173, proline 181, isoleucine 183, and isoleucine 186 together coordinate K(+). Residues 185 to 190 form an interaction with DNA region; the sequence is GIGPKS.

This sequence belongs to the Xni family. Mg(2+) serves as cofactor. K(+) is required as a cofactor.

Functionally, has flap endonuclease activity. During DNA replication, flap endonucleases cleave the 5'-overhanging flap structure that is generated by displacement synthesis when DNA polymerase encounters the 5'-end of a downstream Okazaki fragment. The polypeptide is Flap endonuclease Xni (Shewanella oneidensis (strain ATCC 700550 / JCM 31522 / CIP 106686 / LMG 19005 / NCIMB 14063 / MR-1)).